Reading from the N-terminus, the 160-residue chain is Small ribosomal subunit protein uS7A (160 aa).

Belongs to the universal ribosomal protein uS7 family. As to quaternary structure, part of the 30S ribosomal subunit. Contacts proteins S9 and S11.

In terms of biological role, one of the primary rRNA binding proteins, it binds directly to 16S rRNA where it nucleates assembly of the head domain of the 30S subunit. Is located at the subunit interface close to the decoding center, probably blocks exit of the E-site tRNA. The protein is Small ribosomal subunit protein uS7A of Aquifex aeolicus (strain VF5).